Here is a 251-residue protein sequence, read N- to C-terminus: Flap endonuclease Xni (251 aa).

D104 contributes to the Mg(2+) binding site. One can recognise a 5'-3' exonuclease domain in the interval 160 to 249 (VLPRQLPDYW…IDGNLQQLRL (90 aa)). The K(+) site is built by L171, A172, P180, V182, and I185. Residues 184-189 (GIGPKS) are interaction with DNA.

The protein belongs to the Xni family. The cofactor is Mg(2+). It depends on K(+) as a cofactor.

Its function is as follows. Has flap endonuclease activity. During DNA replication, flap endonucleases cleave the 5'-overhanging flap structure that is generated by displacement synthesis when DNA polymerase encounters the 5'-end of a downstream Okazaki fragment. This is Flap endonuclease Xni from Salmonella newport (strain SL254).